The sequence spans 307 residues: Taste receptor type 2 member 106 (307 aa).

Over 1-7 (MLTIPEG) the chain is Extracellular. A helical membrane pass occupies residues 8–28 (ILLCFITSGSVLGVLGNGFIL). Topologically, residues 29 to 41 (HVNCTDCVRQKFS) are cytoplasmic. The chain crosses the membrane as a helical span at residues 42–62 (TTGFIFTGLAISRICVICIII). Residues 63 to 81 (SDGYLKLFSPHMVASDAHI) lie on the Extracellular side of the membrane. Residues 82 to 104 (IGISYLWIITNHTSTCFATILNL) traverse the membrane as a helical segment. The Cytoplasmic portion of the chain corresponds to 105–124 (FYFLKIANFSHYIFFCLKRK). Residues 125-145 (LNTIFIFLLGCLFISWSVAFP) traverse the membrane as a helical segment. The Extracellular portion of the chain corresponds to 146–179 (QTVKIFNDKMKHRNTSWKFHLHKSKFIINHILLN). A glycan (N-linked (GlcNAc...) asparagine) is linked at asparagine 159. A helical membrane pass occupies residues 180–200 (LGVIFFCMVAIITSFLLIISL). The Cytoplasmic segment spans residues 201–227 (WKHNRKMQLYVSRFKSLNTEVHLKVMK). A helical membrane pass occupies residues 228–248 (VLISFIILLILHVIGILIETL). Over 249-257 (SFLRYENKL) the chain is Extracellular. The helical transmembrane segment at 258 to 278 (LLILGLNFSSMYPCCHSFILI) threads the bilayer. Topologically, residues 279–307 (LANNQLKQASLKALKQFKCHKKDKDVRET) are cytoplasmic.

It belongs to the G-protein coupled receptor T2R family.

The protein resides in the membrane. Putative taste receptor which may play a role in the perception of bitterness. This Rattus norvegicus (Rat) protein is Taste receptor type 2 member 106.